The sequence spans 695 residues: Polyribonucleotide nucleotidyltransferase (695 aa).

Mg(2+)-binding residues include Asp-488 and Asp-494. In terms of domain architecture, KH spans 554–613 (PKTTIIKIKTDKIRDLIGRGGETIKGIISTSCASIDVDDSGNVNIFSNNQKSFDTAVQMV). The S1 motif domain occupies 623-690 (NKVYTGKVVK…DRGRIKLSRK (68 aa)).

The protein belongs to the polyribonucleotide nucleotidyltransferase family. As to quaternary structure, component of the RNA degradosome, which is a multiprotein complex involved in RNA processing and mRNA degradation. The cofactor is Mg(2+).

It is found in the cytoplasm. It carries out the reaction RNA(n+1) + phosphate = RNA(n) + a ribonucleoside 5'-diphosphate. Functionally, involved in mRNA degradation. Catalyzes the phosphorolysis of single-stranded polyribonucleotides processively in the 3'- to 5'-direction. The protein is Polyribonucleotide nucleotidyltransferase of Vesicomyosocius okutanii subsp. Calyptogena okutanii (strain HA).